A 212-amino-acid polypeptide reads, in one-letter code: ER lumen protein-retaining receptor 1 (212 aa).

At Met-1–Phe-4 the chain is on the lumenal side. The chain crosses the membrane as a helical span at residues Arg-5–Trp-24. The Cytoplasmic portion of the chain corresponds to Lys-25–Ile-32. Residues Ser-33–Phe-52 form a helical membrane-spanning segment. The segment at Arg-47–Tyr-48 is interaction with the K-D-E-L motif on target proteins. Residues Thr-53–Leu-58 lie on the Lumenal side of the membrane. The helical transmembrane segment at Tyr-59–Tyr-79 threads the bilayer. Topologically, residues Ser-80–Thr-92 are cytoplasmic. Residues Phe-93–Asn-110 form a helical membrane-spanning segment. At His-111–Leu-116 the chain is on the lumenal side. A helical transmembrane segment spans residues Glu-117–Leu-135. At Phe-136 to Ser-149 the chain is on the cytoplasmic side. A helical membrane pass occupies residues His-150–Trp-168. The interaction with the K-D-E-L motif on target proteins stretch occupies residues Arg-159–Arg-169. At Arg-169–Leu-178 the chain is on the lumenal side. A helical transmembrane segment spans residues Ile-179–Ile-199. The Cytoplasmic segment spans residues Thr-200 to Ala-212. The tract at residues Lys-204–Lys-207 is important for recycling of cargo proteins with the sequence motif K-D-E-L from the Golgi to the endoplasmic reticulum. At Ser-209 the chain carries Phosphoserine; by PKA.

This sequence belongs to the ERD2 family. In terms of assembly, upon ligand binding the receptor oligomerizes and interacts with components of the transport machinery such as ARFGAP1 and ARF1. Post-translationally, phosphorylation by PKA at Ser-209 is required for endoplasmic reticulum retention function.

The protein localises to the golgi apparatus membrane. It is found in the cytoplasmic vesicle. The protein resides in the COPI-coated vesicle membrane. Its subcellular location is the endoplasmic reticulum membrane. It localises to the endoplasmic reticulum-Golgi intermediate compartment membrane. In terms of biological role, receptor for the C-terminal sequence motif K-D-E-L that is present on endoplasmic reticulum resident proteins and that mediates their recycling from the Golgi back to the endoplasmic reticulum. The protein is ER lumen protein-retaining receptor 1 (KDELR1) of Bos taurus (Bovine).